A 424-amino-acid chain; its full sequence is MSVTVIVGAQCGDEGKGKMVDLIAQDYDLVIRFQGGDNAGHTVVNQYGTFKMHLIPCGIFNQNAISLVGTGMVVNPDELQKEMKQITSAGMSVDNLKISTRANILMPYHRDLDELNEQSGGMSIGTTKRGIGPAYAGRATRTNIRFGDLAHQDYLKSHFEKVLPAINHQLSFFGAAQYTVDQLCEYCSNWYKLYNEHIVDAFTLIHNMMKENKRILFEGQLGVMKDIDLGIYPFVTSSNPIAAYAAVSSGIPARSITSVIGVAKAFSSQVGDGPFPTEVLDNCIVSLRGTGKNIDDEFGARTGRPRRLGWLDIPVLRYAHTINGFDTLAICKLDKMDSLPEIKICTSYRYQDQILSVFPDTEILGQVKAEYETLPGWECTTRGVNSFDDLPENAKSYIKRIEELVGVPVKYIGVGPARSDVIIR.

GTP contacts are provided by residues 12-18 (GDEGKGK) and 40-42 (GHT). The Proton acceptor role is filled by aspartate 13. Positions 13 and 40 each coordinate Mg(2+). IMP is bound by residues 13 to 16 (DEGK), 38 to 41 (NAGH), threonine 127, arginine 141, threonine 236, and arginine 304. The Proton donor role is filled by histidine 41. 300 to 306 (ARTGRPR) provides a ligand contact to substrate. GTP is bound by residues arginine 306, 332–334 (KLD), and 413–415 (GVG).

This sequence belongs to the adenylosuccinate synthetase family. Homodimer. It depends on Mg(2+) as a cofactor.

Its subcellular location is the cytoplasm. The catalysed reaction is IMP + L-aspartate + GTP = N(6)-(1,2-dicarboxyethyl)-AMP + GDP + phosphate + 2 H(+). It functions in the pathway purine metabolism; AMP biosynthesis via de novo pathway; AMP from IMP: step 1/2. Its function is as follows. Plays an important role in the de novo pathway of purine nucleotide biosynthesis. Catalyzes the first committed step in the biosynthesis of AMP from IMP. This Methanosarcina acetivorans (strain ATCC 35395 / DSM 2834 / JCM 12185 / C2A) protein is Adenylosuccinate synthetase 1.